A 58-amino-acid chain; its full sequence is Small ribosomal subunit protein bS21 (58 aa).

Belongs to the bacterial ribosomal protein bS21 family.

The chain is Small ribosomal subunit protein bS21 from Prochlorococcus marinus (strain MIT 9515).